We begin with the raw amino-acid sequence, 65 residues long: Small ribosomal subunit protein bS21 (65 aa).

The protein belongs to the bacterial ribosomal protein bS21 family.

The polypeptide is Small ribosomal subunit protein bS21 (Chlorobium limicola (strain DSM 245 / NBRC 103803 / 6330)).